The sequence spans 453 residues: Phosphoglucosamine mutase (453 aa).

S102 (phosphoserine intermediate) is an active-site residue. Mg(2+) is bound by residues S102, D243, D245, and D247. Residue S102 is modified to Phosphoserine.

It belongs to the phosphohexose mutase family. The cofactor is Mg(2+). Activated by phosphorylation.

The catalysed reaction is alpha-D-glucosamine 1-phosphate = D-glucosamine 6-phosphate. Catalyzes the conversion of glucosamine-6-phosphate to glucosamine-1-phosphate. The protein is Phosphoglucosamine mutase of Bartonella tribocorum (strain CIP 105476 / IBS 506).